A 672-amino-acid polypeptide reads, in one-letter code: F(420)H(2) dehydrogenase subunit L (672 aa).

16 helical membrane passes run glutamate 8–glycine 28, isoleucine 37–leucine 57, isoleucine 79–isoleucine 99, isoleucine 136–phenylalanine 156, valine 179–phenylalanine 199, isoleucine 225–valine 245, threonine 265–alanine 285, leucine 298–valine 318, methionine 337–phenylalanine 357, isoleucine 360–valine 380, valine 394–isoleucine 414, tyrosine 447–methionine 467, proline 483–leucine 503, leucine 545–isoleucine 565, phenylalanine 601–isoleucine 621, and threonine 652–leucine 672.

It belongs to the complex I subunit 5 family. The FPO complex is composed of at least 13 different subunits. FpoA, FpoH, FpoJ, FpoK, FpoL, FpoM and FpoN proteins constitute the membrane sector of the complex.

It is found in the cell membrane. The catalysed reaction is methanophenazine + reduced coenzyme F420-(gamma-L-Glu)(n) = dihydromethanophenazine + oxidized coenzyme F420-(gamma-L-Glu)(n) + H(+). Its function is as follows. Component of the F(420)H(2) dehydrogenase (FPO complex) which is part of the energy-conserving F(420)H(2):heterodisulfide oxidoreductase system. The membrane-bound electron transfer system of the complex plays an important role in the metabolism of methylotrophic methanogens when the organisms grow on methanol or methylamines. Catalyzes the oxidation of methanophenazine to dihydromethanophenazine. It shuttles electrons from F(420)H(2), via FAD and iron-sulfur (Fe-S) centers, to methanophenazine (an electron carrier in the membrane). It couples the redox reaction to proton translocation (for every two electrons transferred, two hydrogen ions are translocated across the cytoplasmic membrane), and thus conserves the redox energy in a proton gradient. It also catalyzes the oxidation of F(420)H(2) with quinones such as 2,3-dimethyl-1,4-naphthoquinone, 2-methyl-1,4-naphthoquinone and tetramethyl-p-benzoquinone. This is F(420)H(2) dehydrogenase subunit L (fpoL) from Methanosarcina mazei (strain ATCC BAA-159 / DSM 3647 / Goe1 / Go1 / JCM 11833 / OCM 88) (Methanosarcina frisia).